A 208-amino-acid chain; its full sequence is Uracil phosphoribosyltransferase (208 aa).

5-phospho-alpha-D-ribose 1-diphosphate-binding positions include R78, R103, and 130–138 (DPMFATGGT). Uracil is bound by residues I193 and 198–200 (GDA). A 5-phospho-alpha-D-ribose 1-diphosphate-binding site is contributed by D199.

The protein belongs to the UPRTase family. It depends on Mg(2+) as a cofactor.

The catalysed reaction is UMP + diphosphate = 5-phospho-alpha-D-ribose 1-diphosphate + uracil. The protein operates within pyrimidine metabolism; UMP biosynthesis via salvage pathway; UMP from uracil: step 1/1. With respect to regulation, allosterically activated by GTP. Catalyzes the conversion of uracil and 5-phospho-alpha-D-ribose 1-diphosphate (PRPP) to UMP and diphosphate. This chain is Uracil phosphoribosyltransferase, found in Campylobacter jejuni subsp. jejuni serotype O:6 (strain 81116 / NCTC 11828).